A 571-amino-acid polypeptide reads, in one-letter code: Proline--tRNA ligase (571 aa).

This sequence belongs to the class-II aminoacyl-tRNA synthetase family. ProS type 1 subfamily. As to quaternary structure, homodimer.

It is found in the cytoplasm. The catalysed reaction is tRNA(Pro) + L-proline + ATP = L-prolyl-tRNA(Pro) + AMP + diphosphate. In terms of biological role, catalyzes the attachment of proline to tRNA(Pro) in a two-step reaction: proline is first activated by ATP to form Pro-AMP and then transferred to the acceptor end of tRNA(Pro). As ProRS can inadvertently accommodate and process non-cognate amino acids such as alanine and cysteine, to avoid such errors it has two additional distinct editing activities against alanine. One activity is designated as 'pretransfer' editing and involves the tRNA(Pro)-independent hydrolysis of activated Ala-AMP. The other activity is designated 'posttransfer' editing and involves deacylation of mischarged Ala-tRNA(Pro). The misacylated Cys-tRNA(Pro) is not edited by ProRS. The protein is Proline--tRNA ligase of Pseudomonas entomophila (strain L48).